The chain runs to 623 residues: MPAVYGARLTTFEDSEKESEYGYVRKVSGPVVVADGMAGAAMYELVRVGRDNLIGEIIRLEGDSATIQVYEETAGLMVNDPVLRTHKPLSVELGPGILGNIFDGIQRPLKTIAKRSGDVYIPRGVSVPALDKDTLWEFQPKKIGEGDLLTGGDLYATVFENTLMQHHIALPPDAMGKITYIAPPGQYSITDTVLELEFQGVKKKFTMLQTWPVRTPRPVASKLAADTPLLTGQRVLDALFPSVLGGTCAIPGAFGCGKTVISQALSKYSNSDAVVYVGCGERGNEMAEVLMDFPQLTMTLPDGREESVMKRTTLVANTSNMPVAAREASIYTGITLAEYFRDMGYNVSMMADSTSRWAEALREISGRLAEMPADSGYPAYLAARLASFYERPGKVKCLGGPERTGSVTIVGAVSPPGGDFSDPVTSATLSIVQVFWGLDKKLAQRKHFPSVNWLISYSKYSTALESFYEQFDPDFINIRTKAREVLQREDDLNEIVQLVGKDALAEGDKITLETAKLLREDYLAQNAFTPYDKFCPFYKSVWMMRNIIHFYNLANQAVERGAGSDGQKITYSLIKHRVGDLFYRLVSQKFEDPAEGEAALVGQFQKLHEDLSTGFRNLEDETR.

ATP is bound at residue 252–259 (GAFGCGKT).

It belongs to the ATPase alpha/beta chains family. As to quaternary structure, V-ATPase is a heteromultimeric enzyme composed of a peripheral catalytic V1 complex (main components: subunits A, B, C, D, E, and F) attached to an integral membrane V0 proton pore complex (main component: the proteolipid protein).

The enzyme catalyses ATP + H2O + 4 H(+)(in) = ADP + phosphate + 5 H(+)(out). In terms of biological role, catalytic subunit of the peripheral V1 complex of vacuolar ATPase. V-ATPase vacuolar ATPase is responsible for acidifying a variety of intracellular compartments in eukaryotic cells. The sequence is that of V-type proton ATPase catalytic subunit A from Vigna radiata var. radiata (Mung bean).